The chain runs to 79 residues: Conotoxin Cal9.2a (79 aa).

The first 23 residues, 1–23 (MNCYLILTVALLLTSAMTGTTTA), serve as a signal peptide directing secretion. The propeptide occupies 24–33 (GQLNKKGVTL). 3 disulfide bridges follow: Cys41–Cys58, Cys46–Cys68, and Cys48–Cys73.

As to expression, expressed by the venom duct.

The protein resides in the secreted. In terms of biological role, probable neurotoxin with unknown target. Possibly targets ion channels. In Californiconus californicus (California cone), this protein is Conotoxin Cal9.2a.